We begin with the raw amino-acid sequence, 127 residues long: uncharacterized protein (127 aa).

Positions 1–127 (MKIVVTSIFV…CGNLIQIVQK (127 aa)) constitute a VOC domain.

The protein belongs to the glyoxalase I family.

This is an uncharacterized protein from Bacillus subtilis (strain 168).